The chain runs to 422 residues: Histidine--tRNA ligase (422 aa).

Belongs to the class-II aminoacyl-tRNA synthetase family. Homodimer.

Its subcellular location is the cytoplasm. It carries out the reaction tRNA(His) + L-histidine + ATP = L-histidyl-tRNA(His) + AMP + diphosphate + H(+). In Vesicomyosocius okutanii subsp. Calyptogena okutanii (strain HA), this protein is Histidine--tRNA ligase.